The following is a 525-amino-acid chain: Endoglucanase 10 (525 aa).

Residues 1-26 form the signal peptide; that stretch reads MEEKSKSRGWCGWFIAIIVLASVILA. Catalysis depends on D109, which acts as the Nucleophile. N-linked (GlcNAc...) asparagine glycosylation is present at N259. The active site involves H442. N-linked (GlcNAc...) asparagine glycans are attached at residues N464 and N484. Residues D489 and E498 contribute to the active site.

Belongs to the glycosyl hydrolase 9 (cellulase E) family.

The protein localises to the secreted. The catalysed reaction is Endohydrolysis of (1-&gt;4)-beta-D-glucosidic linkages in cellulose, lichenin and cereal beta-D-glucans.. The protein is Endoglucanase 10 of Arabidopsis thaliana (Mouse-ear cress).